The chain runs to 561 residues: MRLWKSMAWGILLWHSQSGALCPAWPPARAAEEIARLQQQLADWNDIYWKQGVSAVDDSVYDQLSARLVQWQRCVGQDVSSTPVSPPLNGTTMHPVAHTGVRKLADRQAVEQWMRGRSELWVQPKVDGVAVTLVYQNGKLARAISRGNGLQGEDWTPKIRLIPSIPQTTQGALANAVLQGEIFLQREGHIQQRMGGMNARSKVAGMLMRQDNASALNSLGIFIWAWPDGPANMPERLSQLAKAGFSLTKKYTLAVKDASEVERARQSWLTSALPFVTDGVVIRMAKEPAAQYWRPGQGDWLAAWKYPPVAQVAQVSAIQFSVGKSGKITVVASLVPVILDDKRVQRVNIGSVKRWEAWDIAPGDQILVSLAGQGIPRLDEVVWRSRERSKPVPPDSHFNSLTCFYASATCQEQFISRLVWLGSRSALGLDGMGEASWRALHQTHRFEHIFSWLALTSAQIANTPGFAKGKSEQIWRQFNLARRQSFTRWIMAMDIPLTQAALQASGDRSWEQLLMRTEQHWRQLPATGERRAGRVIDWRDNPQIKALSRWLSAQHIPGFGS.

Lysine 125 acts as the N6-AMP-lysine intermediate in catalysis.

This sequence belongs to the NAD-dependent DNA ligase family. LigB subfamily.

It carries out the reaction NAD(+) + (deoxyribonucleotide)n-3'-hydroxyl + 5'-phospho-(deoxyribonucleotide)m = (deoxyribonucleotide)n+m + AMP + beta-nicotinamide D-nucleotide.. Functionally, catalyzes the formation of phosphodiester linkages between 5'-phosphoryl and 3'-hydroxyl groups in double-stranded DNA using NAD as a coenzyme and as the energy source for the reaction. This chain is DNA ligase B, found in Salmonella schwarzengrund (strain CVM19633).